Consider the following 344-residue polypeptide: Dihydroorotate dehydrogenase (quinone) (344 aa).

FMN is bound by residues 64-68 (AGLDK) and threonine 88. Lysine 68 lines the substrate pocket. 113–117 (NRMGF) serves as a coordination point for substrate. Asparagine 144 and asparagine 177 together coordinate FMN. A substrate-binding site is contributed by asparagine 177. The active-site Nucleophile is serine 180. Asparagine 182 is a substrate binding site. The FMN site is built by lysine 222 and threonine 250. 251–252 (NT) contacts substrate. FMN is bound by residues glycine 273, glycine 302, and 323–324 (YS).

It belongs to the dihydroorotate dehydrogenase family. Type 2 subfamily. As to quaternary structure, monomer. FMN serves as cofactor.

The protein resides in the cell membrane. It carries out the reaction (S)-dihydroorotate + a quinone = orotate + a quinol. It functions in the pathway pyrimidine metabolism; UMP biosynthesis via de novo pathway; orotate from (S)-dihydroorotate (quinone route): step 1/1. Catalyzes the conversion of dihydroorotate to orotate with quinone as electron acceptor. The sequence is that of Dihydroorotate dehydrogenase (quinone) from Polynucleobacter necessarius subsp. necessarius (strain STIR1).